A 437-amino-acid chain; its full sequence is GTPase Obg (437 aa).

Positions 2-160 (SMFLDTAKIS…RQLELELKIL (159 aa)) constitute an Obg domain. Residues 161 to 338 (ADVGLVGFPS…LLEATAELLA (178 aa)) enclose the OBG-type G domain. Residues 167-174 (GFPSVGKS), 192-196 (FTTIV), 214-217 (DLPG), 284-287 (NKMD), and 319-321 (SSL) each bind GTP. Mg(2+) contacts are provided by S174 and T194. The region spanning 359–437 (GFAETEKDFE…IGKFEFEFVD (79 aa)) is the OCT domain.

The protein belongs to the TRAFAC class OBG-HflX-like GTPase superfamily. OBG GTPase family. In terms of assembly, monomer. Mg(2+) serves as cofactor.

The protein localises to the cytoplasm. Functionally, an essential GTPase which binds GTP, GDP and possibly (p)ppGpp with moderate affinity, with high nucleotide exchange rates and a fairly low GTP hydrolysis rate. Plays a role in control of the cell cycle, stress response, ribosome biogenesis and in those bacteria that undergo differentiation, in morphogenesis control. This is GTPase Obg from Streptococcus pyogenes serotype M1.